An 84-amino-acid chain; its full sequence is MSILSFLLGEKKKSASVAKERLQLIIAHERVGGRPPADYLPALQKELVAVISKYVQISNDDIRVSLERQDDLEVLEVKIEIPQA.

This sequence belongs to the MinE family.

Prevents the cell division inhibition by proteins MinC and MinD at internal division sites while permitting inhibition at polar sites. This ensures cell division at the proper site by restricting the formation of a division septum at the midpoint of the long axis of the cell. In Burkholderia multivorans (strain ATCC 17616 / 249), this protein is Cell division topological specificity factor.